The following is a 316-amino-acid chain: Malate dehydrogenase (316 aa).

NAD(+) contacts are provided by residues 12-17 (GAGNIG) and Asp36. Substrate is bound by residues Arg85 and Arg91. Residues Asn98 and 121–123 (VTN) contribute to the NAD(+) site. Substrate is bound by residues Asn123 and Arg154. His178 (proton acceptor) is an active-site residue.

This sequence belongs to the LDH/MDH superfamily. MDH type 3 family.

It catalyses the reaction (S)-malate + NAD(+) = oxaloacetate + NADH + H(+). Catalyzes the reversible oxidation of malate to oxaloacetate. The polypeptide is Malate dehydrogenase (Wolbachia sp. subsp. Brugia malayi (strain TRS)).